We begin with the raw amino-acid sequence, 309 residues long: Protein lifeguard 3 (309 aa).

Disordered regions lie at residues Met1–Val31 and Pro64–Pro84. The segment covering Asp70–Pro84 has biased composition (basic and acidic residues). Phosphoserine is present on residues Ser79 and Ser81. Transmembrane regions (helical) follow at residues Tyr101–Val121, Val132–Cys152, Ile163–Met183, Ala188–Phe208, Phe221–Phe241, Ile244–Ala264, and Gly286–Gly306.

Belongs to the BI1 family. LFG subfamily. Expressed in most tissues except spleen, thymus and testis.

Its subcellular location is the membrane. It localises to the lysosome membrane. It is found in the endosome membrane. In terms of biological role, negatively regulates aortic matrix metalloproteinase-9 (MMP9) production and may play a protective role in vascular remodeling. The sequence is that of Protein lifeguard 3 (Tmbim1) from Mus musculus (Mouse).